Reading from the N-terminus, the 191-residue chain is Small ribosomal subunit protein uS7 (191 aa).

The interval 56 to 80 (NKSGEQGDGDGEGGGKAGGIKKRSL) is disordered.

The protein belongs to the universal ribosomal protein uS7 family. As to quaternary structure, part of the 30S ribosomal subunit. Contacts proteins S9 and S11.

One of the primary rRNA binding proteins, it binds directly to 16S rRNA where it nucleates assembly of the head domain of the 30S subunit. Is located at the subunit interface close to the decoding center, probably blocks exit of the E-site tRNA. This chain is Small ribosomal subunit protein uS7, found in Coxiella burnetii (strain CbuG_Q212) (Coxiella burnetii (strain Q212)).